The primary structure comprises 465 residues: GTPase Der (465 aa).

2 EngA-type G domains span residues 3 to 167 (PLVA…PEEG) and 179 to 352 (VRIA…ASAT). GTP-binding positions include 9 to 16 (GRPNVGKS), 57 to 61 (DTGGI), 119 to 122 (NKID), 185 to 192 (GRPNVGKS), 232 to 236 (DTAGL), and 297 to 300 (NKWD). The KH-like domain maps to 353–437 (HEFSTSEVNQ…PVRFIFREGA (85 aa)).

This sequence belongs to the TRAFAC class TrmE-Era-EngA-EngB-Septin-like GTPase superfamily. EngA (Der) GTPase family. In terms of assembly, associates with the 50S ribosomal subunit.

Its function is as follows. GTPase that plays an essential role in the late steps of ribosome biogenesis. In Xanthomonas axonopodis pv. citri (strain 306), this protein is GTPase Der.